A 536-amino-acid chain; its full sequence is 2-isopropylmalate synthase (536 aa).

The Pyruvate carboxyltransferase domain maps to 8–273 (VLIFDTTLRD…FFGKDSESPT (266 aa)). Residues Asp-17, His-208, His-210, and Asn-244 each coordinate Mn(2+). The regulatory domain stretch occupies residues 408–536 (KLHLVQVSCG…PQHDVVKANL (129 aa)).

This sequence belongs to the alpha-IPM synthase/homocitrate synthase family. LeuA type 1 subfamily. Homodimer. Requires Mn(2+) as cofactor.

It is found in the cytoplasm. It catalyses the reaction 3-methyl-2-oxobutanoate + acetyl-CoA + H2O = (2S)-2-isopropylmalate + CoA + H(+). The protein operates within amino-acid biosynthesis; L-leucine biosynthesis; L-leucine from 3-methyl-2-oxobutanoate: step 1/4. Catalyzes the condensation of the acetyl group of acetyl-CoA with 3-methyl-2-oxobutanoate (2-ketoisovalerate) to form 3-carboxy-3-hydroxy-4-methylpentanoate (2-isopropylmalate). This chain is 2-isopropylmalate synthase, found in Prochlorococcus marinus (strain SARG / CCMP1375 / SS120).